Here is a 152-residue protein sequence, read N- to C-terminus: Lipoprotein signal peptidase (152 aa).

2 helical membrane passes run 55–75 (NGRW…LYYL) and 87–107 (VALG…IATG). Catalysis depends on residues Asp111 and Asp129. Residues 125 to 145 (FNVADICVTVGVGLLFLHLVL) traverse the membrane as a helical segment.

Belongs to the peptidase A8 family.

It is found in the cell membrane. It catalyses the reaction Release of signal peptides from bacterial membrane prolipoproteins. Hydrolyzes -Xaa-Yaa-Zaa-|-(S,diacylglyceryl)Cys-, in which Xaa is hydrophobic (preferably Leu), and Yaa (Ala or Ser) and Zaa (Gly or Ala) have small, neutral side chains.. Its pathway is protein modification; lipoprotein biosynthesis (signal peptide cleavage). Functionally, this protein specifically catalyzes the removal of signal peptides from prolipoproteins. This Symbiobacterium thermophilum (strain DSM 24528 / JCM 14929 / IAM 14863 / T) protein is Lipoprotein signal peptidase.